A 228-amino-acid polypeptide reads, in one-letter code: Claudin-10 (228 aa).

The chain crosses the membrane as a helical span at residues 1–21 (MASTASEIIAFMVSISGWVLV). At 22 to 80 (SSTLPTDYWKVSTIDGTVITTATYWANLWKACVTDSTGVSNCKDFPSMLALDGYIQACR) the chain is on the extracellular side. The chain crosses the membrane as a helical span at residues 81–101 (GLMIAAVSLGFFGSIFALFGM). The Cytoplasmic portion of the chain corresponds to 102–115 (KCTKVGGSDKAKAK). Residues 116-136 (IACLAGIVFILSGLCSMTGCS) form a helical membrane-spanning segment. The Extracellular segment spans residues 137 to 160 (LYANKITTEFFDPLFVEQKYELGA). The helical transmembrane segment at 161–181 (ALFIGWAGASLCIIGGVIFCF) threads the bilayer. The Cytoplasmic segment spans residues 182 to 228 (SISDNNKTPRYTYNGATSVMSSRTKYHGGEDFKTTNPSKQFDKNAYV).

This sequence belongs to the claudin family. As to quaternary structure, can form homodimers both in trans (interaction between CLDN10 molecules in opposing membranes) and in cis (interaction between CLDN10 molecules within one membrane). Interacts with CLDN19. Expressed in the kidney, eccrine sweat glands and in all layers of the epidermis. In the kidney, it is detected in the thick ascending limb of Henle's loop (TAL). In the sweat glands, it is expressed in cells from secretory portions, corresponding to the clear cells.

Its subcellular location is the cell junction. The protein resides in the tight junction. The protein localises to the cell membrane. The enzyme catalyses Na(+)(in) = Na(+)(out). It catalyses the reaction Li(+)(in) = Li(+)(out). It carries out the reaction K(+)(in) = K(+)(out). The catalysed reaction is Rb(+)(in) = Rb(+)(out). The enzyme catalyses Cs(+)(in) = Cs(+)(out). It catalyses the reaction NH4(+)(in) = NH4(+)(out). It carries out the reaction methylamine(out) = methylamine(in). The catalysed reaction is Mg(2+)(in) = Mg(2+)(out). The enzyme catalyses Ca(2+)(in) = Ca(2+)(out). It catalyses the reaction Sr(2+)(in) = Sr(2+)(out). It carries out the reaction chloride(in) = chloride(out). The catalysed reaction is nitrate(in) = nitrate(out). Forms paracellular channels: polymerizes in tight junction strands with cation- and anion-selective channels through the strands, conveying epithelial permeability in a process known as paracellular tight junction permeability. In terms of biological role, forms cation-selective paracellular channels. In sweat glands and in the thick ascending limb (TAL) of Henle's loop in kidney, it controls paracellular sodium permeability which is essential for proper sweat production and renal function. Functionally, forms anion-selective paracellular channels. In renal proximal tubules, it conveys selective chloride over hydrogencarbonate anion permeability which is required for renal chloride reabsorption and salt homeostasis. The polypeptide is Claudin-10 (Homo sapiens (Human)).